A 411-amino-acid polypeptide reads, in one-letter code: Glutamyl-tRNA reductase (411 aa).

Residues 49–52, Ser99, 104–106, and Gln110 each bind substrate; these read TCNR and ENE. Residue Cys50 is the Nucleophile of the active site. 179-184 is an NADP(+) binding site; sequence GAGEAG.

It belongs to the glutamyl-tRNA reductase family. Homodimer.

It catalyses the reaction (S)-4-amino-5-oxopentanoate + tRNA(Glu) + NADP(+) = L-glutamyl-tRNA(Glu) + NADPH + H(+). It functions in the pathway porphyrin-containing compound metabolism; protoporphyrin-IX biosynthesis; 5-aminolevulinate from L-glutamyl-tRNA(Glu): step 1/2. Its function is as follows. Catalyzes the NADPH-dependent reduction of glutamyl-tRNA(Glu) to glutamate 1-semialdehyde (GSA). The protein is Glutamyl-tRNA reductase of Hyperthermus butylicus (strain DSM 5456 / JCM 9403 / PLM1-5).